Consider the following 399-residue polypeptide: S-adenosylmethionine synthase (399 aa).

Position 136–141 (136–141) interacts with ATP; that stretch reads GTGSAD.

Belongs to the AdoMet synthase 2 family. The cofactor is Mg(2+).

The catalysed reaction is L-methionine + ATP + H2O = S-adenosyl-L-methionine + phosphate + diphosphate. The protein operates within amino-acid biosynthesis; S-adenosyl-L-methionine biosynthesis; S-adenosyl-L-methionine from L-methionine: step 1/1. Its function is as follows. Catalyzes the formation of S-adenosylmethionine from methionine and ATP. In Methanothrix thermoacetophila (strain DSM 6194 / JCM 14653 / NBRC 101360 / PT) (Methanosaeta thermophila), this protein is S-adenosylmethionine synthase.